Reading from the N-terminus, the 636-residue chain is Serine/threonine-protein kinase hal4 (636 aa).

Basic and acidic residues predominate over residues 1–11; it reads MGEKDKLHEIS. 2 disordered regions span residues 1–167 and 181–261; these read MGEK…AGVV and AASP…PSSA. Residues 33-45 show a composition bias toward pro residues; the sequence is EPPPPSSQQPPST. Composition is skewed to polar residues over residues 56-92 and 113-124; these read ALKQ…QQPL and NPSRHVSSTSNK. Low complexity predominate over residues 140–155; it reads PSGSVPPSASVSRANS. Residues 182–226 are compositionally biased toward polar residues; it reads ASPNPSTPSNGPAPVSTTATPSRNPVTRLQRIFSQNSVSRQNSRT. Position 218 is a phosphoserine (Ser-218). Residues 234 to 261 are compositionally biased toward low complexity; the sequence is NTEETNSTGGSETGGAANSSSTSNPSSA. Residues Thr-238 and Thr-241 each carry the phosphothreonine modification. Residue Ser-299 is modified to Phosphoserine. Positions 351–623 constitute a Protein kinase domain; that stretch reads GRCQEVIGRG…AKQIMKSEWV (273 aa). ATP contacts are provided by residues 357-365 and Lys-385; that span reads IGRGAFGVV. Asp-481 (proton acceptor) is an active-site residue.

The protein belongs to the protein kinase superfamily. Ser/Thr protein kinase family. In terms of assembly, interacts with sty1.

The protein resides in the cytoplasm. It carries out the reaction L-seryl-[protein] + ATP = O-phospho-L-seryl-[protein] + ADP + H(+). The enzyme catalyses L-threonyl-[protein] + ATP = O-phospho-L-threonyl-[protein] + ADP + H(+). In terms of biological role, promotes K(+) uptake, by the potassium transporter trk1-trk2, which leads to the subsequent cellular resistance to toxic cations such as Na(+), Li(+) and Ca(2+). In Schizosaccharomyces pombe (strain 972 / ATCC 24843) (Fission yeast), this protein is Serine/threonine-protein kinase hal4 (hal4).